A 326-amino-acid polypeptide reads, in one-letter code: MDETKIPKKLQSDDEENISLISSLPFDVDFDSTKLFKYQGCWYDDKTLQGVLNFQRGFEPQDTDIIIASFPKSGTTWLKALTVALLERSKQKHSSDDHPLLLDNPHGLVPFLELRLFTETSKPDLTSISSSPRLFSTHVAFQTLREALKNSPCKIVYVWRNVKDVLVSFWYFNSAKLKIEEERSILDSMFESFCRGVINYGPSWEHVLNYWRASLEDSKNVLFLKYEELKTEPRVQLKRLAEFLDCPFTVEEEERGSVEEILDLCSLRNLKNLEINKTGKTLRGADHKIFFRKGEVGDSKNHLTPEMEKIIDMITEEKFEGSDLKF.

72–77 (KSGTTW) lines the 3'-phosphoadenylyl sulfate pocket. Residue histidine 138 is the Proton acceptor of the active site. 3'-phosphoadenylyl sulfate contacts are provided by residues arginine 160, serine 168, tyrosine 226, and 292–294 (RKG).

It belongs to the sulfotransferase 1 family.

Its subcellular location is the cytoplasm. Functionally, sulfotransferase that utilizes 3'-phospho-5'-adenylyl sulfate (PAPS) as sulfonate donor. The chain is Cytosolic sulfotransferase 7 (SOT7) from Arabidopsis thaliana (Mouse-ear cress).